A 553-amino-acid polypeptide reads, in one-letter code: Coiled-coil domain-containing protein 85A (553 aa).

Residues 1 to 28 (MSKAAGGAAAAAAAAESCSPAPAGSSAA) are compositionally biased toward low complexity. The disordered stretch occupies residues 1 to 37 (MSKAAGGAAAAAAAAESCSPAPAGSSAAPPAPVEDLS). Coiled-coil stretches lie at residues 43 to 109 (ELLQ…RDLC) and 137 to 169 (MHKE…KELC). 3 disordered regions span residues 203–414 (YVRD…GMNE), 433–461 (ENRM…GWGS), and 491–518 (SGAD…QPEP). Low complexity predominate over residues 209-220 (DGSSTSSTGSTD). Positions 236–260 (HLQKPRSEGSPEHSKHRSASPEHPQ) are enriched in basic and acidic residues. Residues 376 to 389 (GGSGGSGGSGGGSR) show a composition bias toward gly residues. Residues 391-403 (GTLRRQAQEDGSP) are compositionally biased toward basic and acidic residues. Positions 412–443 (MNESTLSYVRQLEARVRQLEEENRMLPQASQN) form a coiled coil. Over residues 439–455 (QASQNRRQPPTRNSSNM) the composition is skewed to polar residues. Low complexity predominate over residues 491–508 (SGADGSNSSPNSAASFSG). R541 carries the post-translational modification Asymmetric dimethylarginine.

This sequence belongs to the CCDC85 family. As to quaternary structure, may interact with ARVCF; CTNND1; CTNND2 and PKP4.

The protein resides in the cell junction. Its subcellular location is the adherens junction. May play a role in cell-cell adhesion and epithelium development through its interaction with proteins of the beta-catenin family. The polypeptide is Coiled-coil domain-containing protein 85A (CCDC85A) (Homo sapiens (Human)).